The chain runs to 468 residues: Serine/threonine-protein phosphatase 2A 55 kDa regulatory subunit B beta isoform (468 aa).

7 WD repeats span residues 47–86 (SSAD…KNQP), 112–153 (EIEE…KRPE), 196–234 (AHTY…RSFN), 245–285 (ELTE…LCDK), 304–342 (EIIS…RPIE), 359–400 (ENDC…DVTL), and 435–468 (DFSK…DKVN).

This sequence belongs to the phosphatase 2A regulatory subunit B family. As to quaternary structure, PP2A consists of a common heterodimeric core enzyme, composed of a 36 kDa catalytic subunit (subunit C) and a 65 kDa constant regulatory subunit (PR65 or subunit A), that associates with a variety of regulatory subunits.

It localises to the cytoplasm. The protein localises to the cytoskeleton. It is found in the membrane. In terms of biological role, the B regulatory subunit might modulate substrate selectivity and catalytic activity, and might also direct the localization of the catalytic enzyme to a particular subcellular compartment. Negatively controls the initiation of oocyte maturation. In Xenopus laevis (African clawed frog), this protein is Serine/threonine-protein phosphatase 2A 55 kDa regulatory subunit B beta isoform (ppp2r2b).